The chain runs to 98 residues: Large ribosomal subunit protein eL30 (98 aa).

Belongs to the eukaryotic ribosomal protein eL30 family.

The polypeptide is Large ribosomal subunit protein eL30 (Methanosphaera stadtmanae (strain ATCC 43021 / DSM 3091 / JCM 11832 / MCB-3)).